The sequence spans 246 residues: Ubiquinone/menaquinone biosynthesis C-methyltransferase UbiE (246 aa).

S-adenosyl-L-methionine is bound by residues Thr75, Asp95, and 119-120; that span reads DA.

It belongs to the class I-like SAM-binding methyltransferase superfamily. MenG/UbiE family.

The catalysed reaction is a 2-demethylmenaquinol + S-adenosyl-L-methionine = a menaquinol + S-adenosyl-L-homocysteine + H(+). It catalyses the reaction a 2-methoxy-6-(all-trans-polyprenyl)benzene-1,4-diol + S-adenosyl-L-methionine = a 5-methoxy-2-methyl-3-(all-trans-polyprenyl)benzene-1,4-diol + S-adenosyl-L-homocysteine + H(+). The protein operates within quinol/quinone metabolism; menaquinone biosynthesis; menaquinol from 1,4-dihydroxy-2-naphthoate: step 2/2. It functions in the pathway cofactor biosynthesis; ubiquinone biosynthesis. Functionally, methyltransferase required for the conversion of demethylmenaquinol (DMKH2) to menaquinol (MKH2) and the conversion of 2-polyprenyl-6-methoxy-1,4-benzoquinol (DDMQH2) to 2-polyprenyl-3-methyl-6-methoxy-1,4-benzoquinol (DMQH2). The chain is Ubiquinone/menaquinone biosynthesis C-methyltransferase UbiE from Desulfotalea psychrophila (strain LSv54 / DSM 12343).